We begin with the raw amino-acid sequence, 435 residues long: MLDSKLLRTELDETAAKLARRGFKLDVETIGKLEEQRKSIQVEVENLQSTRNSISKQIGQLMSAGDKEGAEKIKQQIGSLGSDLDAKKIELDAVMAQLDDIILSVPNIPADEVPNGKDENDNLEISRWGEPKSYDFELKDHVDLGEMGDGLDFASAVKITGARFIVMKGQFARLHRAIAQFMLDLHTEEHGYTEMYVPYLVNADSLFGTGQLPKFGKDLFHTEPLTEKASDEEPRKLSLIPTAEVPVTNLVRDTISDEADLPLKMTAHTPCFRSEAGSYGRDTRGLIRMHQFDKVELVQITKPEDSMNALEELTGHAEKVLQLLELPYRKVLLCTGDMGFGSHKTYDLEVWVPAQNTYREISSCSNMWDFQARRMQARFRRKGEKKPELVHTLNGSGLAVGRTMVAILENNQEADGRIAIPTVLQKYMGGATHIG.

242-244 (TAE) lines the L-serine pocket. 273 to 275 (RSE) contacts ATP. Glutamate 296 is a binding site for L-serine. 360-363 (EISS) is a binding site for ATP. L-serine is bound at residue serine 396.

Belongs to the class-II aminoacyl-tRNA synthetase family. Type-1 seryl-tRNA synthetase subfamily. As to quaternary structure, homodimer. The tRNA molecule binds across the dimer.

Its subcellular location is the cytoplasm. It catalyses the reaction tRNA(Ser) + L-serine + ATP = L-seryl-tRNA(Ser) + AMP + diphosphate + H(+). It carries out the reaction tRNA(Sec) + L-serine + ATP = L-seryl-tRNA(Sec) + AMP + diphosphate + H(+). Its pathway is aminoacyl-tRNA biosynthesis; selenocysteinyl-tRNA(Sec) biosynthesis; L-seryl-tRNA(Sec) from L-serine and tRNA(Sec): step 1/1. Catalyzes the attachment of serine to tRNA(Ser). Is also able to aminoacylate tRNA(Sec) with serine, to form the misacylated tRNA L-seryl-tRNA(Sec), which will be further converted into selenocysteinyl-tRNA(Sec). The protein is Serine--tRNA ligase of Vibrio vulnificus (strain CMCP6).